The chain runs to 212 residues: Peptide methionine sulfoxide reductase MsrA (212 aa).

The active site involves cysteine 52.

Belongs to the MsrA Met sulfoxide reductase family.

The catalysed reaction is L-methionyl-[protein] + [thioredoxin]-disulfide + H2O = L-methionyl-(S)-S-oxide-[protein] + [thioredoxin]-dithiol. It carries out the reaction [thioredoxin]-disulfide + L-methionine + H2O = L-methionine (S)-S-oxide + [thioredoxin]-dithiol. Has an important function as a repair enzyme for proteins that have been inactivated by oxidation. Catalyzes the reversible oxidation-reduction of methionine sulfoxide in proteins to methionine. The polypeptide is Peptide methionine sulfoxide reductase MsrA (Shigella dysenteriae serotype 1 (strain Sd197)).